Here is a 226-residue protein sequence, read N- to C-terminus: Urease accessory protein UreF (226 aa).

The protein belongs to the UreF family. As to quaternary structure, ureD, UreF and UreG form a complex that acts as a GTP-hydrolysis-dependent molecular chaperone, activating the urease apoprotein by helping to assemble the nickel containing metallocenter of UreC. The UreE protein probably delivers the nickel.

It is found in the cytoplasm. Required for maturation of urease via the functional incorporation of the urease nickel metallocenter. The protein is Urease accessory protein UreF of Burkholderia multivorans (strain ATCC 17616 / 249).